The following is a 640-amino-acid chain: Threonine--tRNA ligase (640 aa).

The 61-residue stretch at 1–61 (MPAITLPDGS…EHDAYVEIVT (61 aa)) folds into the TGS domain. Residues 242-533 (DHRRLGRTQD…LIEHYGGALP (292 aa)) are catalytic. Residues cysteine 333, histidine 384, and histidine 510 each contribute to the Zn(2+) site.

The protein belongs to the class-II aminoacyl-tRNA synthetase family. In terms of assembly, homodimer. Zn(2+) serves as cofactor.

The protein localises to the cytoplasm. The catalysed reaction is tRNA(Thr) + L-threonine + ATP = L-threonyl-tRNA(Thr) + AMP + diphosphate + H(+). Catalyzes the attachment of threonine to tRNA(Thr) in a two-step reaction: L-threonine is first activated by ATP to form Thr-AMP and then transferred to the acceptor end of tRNA(Thr). Also edits incorrectly charged L-seryl-tRNA(Thr). The protein is Threonine--tRNA ligase of Halorhodospira halophila (strain DSM 244 / SL1) (Ectothiorhodospira halophila (strain DSM 244 / SL1)).